We begin with the raw amino-acid sequence, 295 residues long: MELIQDTSRPPAKYVKGIPLIKYFAEALGPLESFEAWPDDLLISTYPKSGTTWVSEILDLIYQEGDLEKCQRAPVFLRVPFLEFSAPGVPTGVELLKDTPAPRLLKTHLPLALLPKTLLDQKVKVIYIARNAKDVAVSYYHFYRMAKVHPDPGTWDSFLEKFMAGEVCYGSWYQHVQEWWELSHTHPVLYLFYEDIKEDPKREIQKILEFIGRSLPEETVDHIVQRTSFKEMKKNPMTNYSTIPTAVMDHSISAFMRKGITGDWKSTFTVAQNELFEAHYAKKMAGCKLRFRWEL.

48–53 (KSGTTW) serves as a coordination point for 3'-phosphoadenylyl sulfate. 106-108 (KTH) contacts substrate. The active-site Proton acceptor is the His-108. 3'-phosphoadenylyl sulfate is bound by residues Arg-130, Ser-138, Tyr-193, 227–232 (TSFKEM), and 255–259 (FMRKG). Phosphoserine is present on Ser-138.

Belongs to the sulfotransferase 1 family. Homodimer. Distal lung parenchyma.

The protein resides in the cytoplasm. It catalyses the reaction a phenol + 3'-phosphoadenylyl sulfate = an aryl sulfate + adenosine 3',5'-bisphosphate + H(+). The catalysed reaction is 17beta-estradiol + 3'-phosphoadenylyl sulfate = 17beta-estradiol 3-sulfate + adenosine 3',5'-bisphosphate + H(+). It carries out the reaction 4-ethylphenol + 3'-phosphoadenylyl sulfate = 4-ethylphenyl sulfate + adenosine 3',5'-bisphosphate + H(+). The enzyme catalyses 4-nitrophenol + 3'-phosphoadenylyl sulfate = 4-nitrophenyl sulfate + adenosine 3',5'-bisphosphate. It catalyses the reaction dopamine + 3'-phosphoadenylyl sulfate = dopamine 3-O-sulfate + adenosine 3',5'-bisphosphate + H(+). The catalysed reaction is dopamine + 3'-phosphoadenylyl sulfate = dopamine 4-O-sulfate + adenosine 3',5'-bisphosphate + H(+). It carries out the reaction 3,3',5-triiodo-L-thyronine + 3'-phosphoadenylyl sulfate = 3,3',5-triiodo-L-thyronine sulfate + adenosine 3',5'-bisphosphate + H(+). The enzyme catalyses 3,3',5'-triiodo-L-thyronine + 3'-phosphoadenylyl sulfate = 3,3',5'-triiodo-L-thyronine sulfate + adenosine 3',5'-bisphosphate + H(+). It catalyses the reaction 3,3'-diiodo-L-thyronine + 3'-phosphoadenylyl sulfate = 3,3'-diiodo-L-thyronine sulfate + adenosine 3',5'-bisphosphate + H(+). The catalysed reaction is L-thyroxine + 3'-phosphoadenylyl sulfate = L-thyroxine sulfate + adenosine 3',5'-bisphosphate + H(+). In terms of biological role, sulfotransferase that utilizes 3'-phospho-5'-adenylyl sulfate (PAPS) as sulfonate donor to catalyze the sulfate conjugation of a wide variety of acceptor molecules bearing a hydroxyl or an amine group. Sulfonation increases the water solubility of most compounds, and therefore their renal excretion, but it can also result in bioactivation to form active metabolites. Displays broad substrate specificity for small phenolic compounds. Plays an important role in the sulfonation of endogenous molecules such as steroid hormones. Mediates also the metabolic activation of carcinogenic N-hydroxyarylamines leading to highly reactive intermediates capable of forming DNA adducts, potentially resulting in mutagenesis. May play a role in gut microbiota-host metabolic interaction. O-sulfonates 4-ethylphenol (4-EP), a dietary tyrosine-derived metabolite produced by gut bacteria. The product 4-EPS crosses the blood-brain barrier and may negatively regulate oligodendrocyte maturation and myelination, affecting the functional connectivity of different brain regions associated with the limbic system. Catalyzes the sulfate conjugation of dopamine. Catalyzes the sulfation of T4 (L-thyroxine/3,5,3',5'-tetraiodothyronine), T3 (3,5,3'-triiodothyronine), rT3 (3,3',5'-triiodothyronine) and 3,3'-T2 (3,3'-diiodothyronine), with a substrate preference of 3,3'-T2 &gt; rT3 &gt; T3 &gt; T4. The chain is Sulfotransferase 1A1 (SULT1A1) from Bos taurus (Bovine).